We begin with the raw amino-acid sequence, 66 residues long: Movement protein TGBp3 (66 aa).

Topologically, residues 1 to 2 (MD) are lumenal. A helical membrane pass occupies residues 3–23 (FTTLIIIGVYLLVFIVYFAKI). The Cytoplasmic portion of the chain corresponds to 24 to 66 (NTSVCTISISGASIEISGCDNPTLFEILPKLRPFNHGLSLPSN).

It belongs to the Tymovirales TGBp3 protein family.

The protein resides in the host endoplasmic reticulum membrane. Its function is as follows. Plays a role in viral cell-to-cell propagation, by facilitating genome transport to neighboring plant cells through plasmosdesmata. May induce the formation of granular vesicles derived from the Endoplasmic reticulum, which align on actin filaments. In Trifolium (WCMV), this protein is Movement protein TGBp3.